The chain runs to 354 residues: MSKVQSITRESWILSTFPEWGSWLNEEIEQEQVAPGTFAMWWLGCTGIWLKSEGGTNVCVDFWCGTGKQSHGNPLMKTGHQMQRMAGVKKLQPNLRTTPFVLDPFAIRQIDAVLATHDHNDHIDVNVAAAVMQNCADDVPFIGPQTCVDLWVGWGVPKERCIVVKPGDVVKVKDIEIHALDAFDRTALITLPADQKAAGVLPEGMDVRAVNYLFKTPGGNLYHSGDSHYSNYYAKHGNEHQIDVALGSYGENPRGITDKMTSADILRMAESLNTKVVIPFHHDIWSNFQADPQEIRVLWEMKKDRLKYGFKPFIWQVGGKFTWPLDKDNFEYHYPRGFDDCFTIEPDLPFKSFL.

The protein belongs to the UlaG family. A divalent metal cation is required as a cofactor.

Its subcellular location is the cytoplasm. It catalyses the reaction L-ascorbate 6-phosphate + H2O = 3-dehydro-L-gulonate 6-phosphate. It functions in the pathway cofactor degradation; L-ascorbate degradation; D-xylulose 5-phosphate from L-ascorbate: step 1/4. In terms of biological role, probably catalyzes the hydrolysis of L-ascorbate-6-P into 3-keto-L-gulonate-6-P. Is essential for L-ascorbate utilization under anaerobic conditions. The polypeptide is Probable L-ascorbate-6-phosphate lactonase UlaG (Salmonella choleraesuis (strain SC-B67)).